We begin with the raw amino-acid sequence, 120 residues long: Putative B3 domain-containing protein At3g28853 (120 aa).

Positions 19–120 form a DNA-binding region, TF-B3; it reads INKRLTQSDV…DKSNEVFYII (102 aa).

It localises to the nucleus. This chain is Putative B3 domain-containing protein At3g28853, found in Arabidopsis thaliana (Mouse-ear cress).